A 173-amino-acid polypeptide reads, in one-letter code: Superoxide dismutase [Cu-Zn] (173 aa).

Residues 1–19 form the signal peptide; it reads MKRFSLAILALVVATGAQA. 3 residues coordinate Cu cation: His67, His69, and His92. The segment at 72–113 is disordered; sequence GSCQPATKDGKASAAESAGGHLDPQNTGKHEGPEGAGHLGDL. A disulfide bridge links Cys74 with Cys169. 4 residues coordinate Zn(2+): His92, His101, His109, and Asp112. His147 lines the Cu cation pocket.

The protein belongs to the Cu-Zn superoxide dismutase family. In terms of assembly, monomer. Cu cation is required as a cofactor. It depends on Zn(2+) as a cofactor.

The protein resides in the periplasm. The catalysed reaction is 2 superoxide + 2 H(+) = H2O2 + O2. In terms of biological role, destroys radicals which are normally produced within the cells and which are toxic to biological systems. This is Superoxide dismutase [Cu-Zn] (sodC) from Escherichia coli O157:H7.